The sequence spans 603 residues: Replication protein E1 (603 aa).

The interval 47–68 is disordered; it reads DDNDLEQGNSRELFHQQESKES. Basic and acidic residues predominate over residues 58–68; sequence ELFHQQESKES. Residues 76 to 78 carry the Nuclear localization signal motif; sequence KRK. Residues serine 81 and serine 89 each carry the phosphoserine; by host modification. The short motif at 88–97 is the Nuclear export signal element; the sequence is LSPRLESITL. The DNA-binding region stretch occupies residues 143-306; it reads QLGTVDIHYK…TIVGHQSTEA (164 aa). Positions 405-555 constitute an SF3 helicase domain; that stretch reads VNFIMFLAAL…FPMKADNTPE (151 aa). Position 431 to 438 (431 to 438) interacts with ATP; sequence GPPNTGKS. Lysine 512 is covalently cross-linked (Glycyl lysine isopeptide (Lys-Gly) (interchain with G-Cter in SUMO)). Residues 578–603 form a disordered region; the sequence is DQEDEGENGESQRSFQCSARSANEHL. A compositionally biased stretch (polar residues) spans 586–603; it reads GESQRSFQCSARSANEHL.

This sequence belongs to the papillomaviridae E1 protein family. In terms of assembly, can form hexamers. Interacts with E2 protein; this interaction increases E1 DNA binding specificity. Interacts with host DNA polymerase subunit POLA2. Interacts with host single stranded DNA-binding protein RPA1. Interacts with host TOP1; this interaction stimulates the enzymatic activity of TOP1. In terms of processing, phosphorylated. Sumoylated.

Its subcellular location is the host nucleus. It carries out the reaction Couples ATP hydrolysis with the unwinding of duplex DNA by translocating in the 3'-5' direction.. The catalysed reaction is ATP + H2O = ADP + phosphate + H(+). In terms of biological role, ATP-dependent DNA 3'-5' helicase required for initiation of viral DNA replication. It forms a complex with the viral E2 protein. The E1-E2 complex binds to the replication origin which contains binding sites for both proteins. During the initial step, a dimer of E1 interacts with a dimer of protein E2 leading to a complex that binds the viral origin of replication with high specificity. Then, a second dimer of E1 displaces the E2 dimer in an ATP-dependent manner to form the E1 tetramer. Following this, two E1 monomers are added to each half of the site, which results in the formation of two E1 trimers on the viral ori. Subsequently, two hexamers will be created. The double hexamer acts as a bi-directional helicase machinery and unwinds the viral DNA and then recruits the host DNA polymerase to start replication. The protein is Replication protein E1 of Human papillomavirus 21.